A 115-amino-acid chain; its full sequence is Probable non-functional immunoglobulin heavy variable 3-38-3 (115 aa).

Positions 1–19 are cleaved as a signal peptide; sequence MQFVLSWVFLVAILKGVQC. Residues 20–44 are framework-1; it reads EVQLVESRGVLVQPGGSLRLSCAAS. Residues 31 to 115 form the Ig-like domain; it reads VQPGGSLRLS…EDTAVYYCKK (85 aa). A disulfide bond links C41 and C113. The interval 45–52 is complementarity-determining-1; that stretch reads GFTVSSNE. Positions 53 to 69 are framework-2; it reads MSWVRQAPGKGLEWVSS. The interval 70-75 is complementarity-determining-2; the sequence is ISGGST. The framework-3 stretch occupies residues 76 to 113; it reads YYADSRKGRFTISRDNSKNTLHLQMNSLRAEDTAVYYC. The complementarity-determining-3 stretch occupies residues 114-115; that stretch reads KK.

As to quaternary structure, immunoglobulins are composed of two identical heavy chains and two identical light chains; disulfide-linked.

It is found in the secreted. Its subcellular location is the cell membrane. In terms of biological role, probable non-functional open reading frame (ORF) of V region of the variable domain of immunoglobulin heavy chains. Non-functional ORF generally cannot participate in the synthesis of a productive immunoglobulin chain due to altered V-(D)-J or switch recombination and/or splicing site (at mRNA level) and/or conserved amino acid change (protein level). Immunoglobulins, also known as antibodies, are membrane-bound or secreted glycoproteins produced by B lymphocytes. In the recognition phase of humoral immunity, the membrane-bound immunoglobulins serve as receptors which, upon binding of a specific antigen, trigger the clonal expansion and differentiation of B lymphocytes into immunoglobulins-secreting plasma cells. Secreted immunoglobulins mediate the effector phase of humoral immunity, which results in the elimination of bound antigens. The antigen binding site is formed by the variable domain of one heavy chain, together with that of its associated light chain. Thus, each immunoglobulin has two antigen binding sites with remarkable affinity for a particular antigen. The variable domains are assembled by a process called V-(D)-J rearrangement and can then be subjected to somatic hypermutations which, after exposure to antigen and selection, allow affinity maturation for a particular antigen. The protein is Probable non-functional immunoglobulin heavy variable 3-38-3 of Homo sapiens (Human).